The following is a 232-amino-acid chain: Large ribosomal subunit protein uL1 (232 aa).

Belongs to the universal ribosomal protein uL1 family. Part of the 50S ribosomal subunit.

Binds directly to 23S rRNA. The L1 stalk is quite mobile in the ribosome, and is involved in E site tRNA release. Functionally, protein L1 is also a translational repressor protein, it controls the translation of the L11 operon by binding to its mRNA. The protein is Large ribosomal subunit protein uL1 of Paraburkholderia phymatum (strain DSM 17167 / CIP 108236 / LMG 21445 / STM815) (Burkholderia phymatum).